Here is a 143-residue protein sequence, read N- to C-terminus: Peptidyl-prolyl cis-trans isomerase FKBP15-3 (143 aa).

The region spanning 56 to 143 is the PPIase FKBP-type domain; that stretch reads GKRVSVHYTG…VFDVELLNVK (88 aa).

Belongs to the FKBP-type PPIase family.

The catalysed reaction is [protein]-peptidylproline (omega=180) = [protein]-peptidylproline (omega=0). Functionally, PPIases accelerate the folding of proteins. It catalyzes the cis-trans isomerization of proline imidic peptide bonds in oligopeptides. This chain is Peptidyl-prolyl cis-trans isomerase FKBP15-3 (FKBP15-3), found in Arabidopsis thaliana (Mouse-ear cress).